A 272-amino-acid chain; its full sequence is Phosphate import ATP-binding protein PstB (272 aa).

An ABC transporter domain is found at 18-257 (VSIQNATISY…FNDTDKIFNA (240 aa)). 50–57 (GPSGCGKS) provides a ligand contact to ATP.

This sequence belongs to the ABC transporter superfamily. Phosphate importer (TC 3.A.1.7) family. In terms of assembly, the complex is composed of two ATP-binding proteins (PstB), two transmembrane proteins (PstC and PstA) and a solute-binding protein (PstS).

The protein localises to the cell inner membrane. The enzyme catalyses phosphate(out) + ATP + H2O = ADP + 2 phosphate(in) + H(+). Part of the ABC transporter complex PstSACB involved in phosphate import. Responsible for energy coupling to the transport system. The chain is Phosphate import ATP-binding protein PstB from Synechococcus sp. (strain CC9311).